The primary structure comprises 501 residues: Dihydrolipoyl dehydrogenase, mitochondrial (501 aa).

The N-terminal 31 residues, 1–31 (MAMANLARRKGYSLLSSETLRYSFSLRSRAF), are a transit peptide targeting the mitochondrion. FAD is bound by residues 67 to 76 (EKRGALGGTC), Lys85, Gly149, and 178 to 180 (TGS). A disulfide bridge links Cys76 with Cys81. NAD(+)-binding positions include 215 to 222 (GAGYIGLE), Glu238, Val272, and Gly307. FAD contacts are provided by residues Asp348 and 354-357 (MLAH). His480 acts as the Proton acceptor in catalysis.

Belongs to the class-I pyridine nucleotide-disulfide oxidoreductase family. In terms of assembly, homodimer. It depends on FAD as a cofactor.

It localises to the mitochondrion matrix. The catalysed reaction is N(6)-[(R)-dihydrolipoyl]-L-lysyl-[protein] + NAD(+) = N(6)-[(R)-lipoyl]-L-lysyl-[protein] + NADH + H(+). Lipoamide dehydrogenase is a component of the glycine cleavage system as well as of the alpha-ketoacid dehydrogenase complexes. The pyruvate dehydrogenase complex contains multiple copies of three enzymatic components: pyruvate dehydrogenase (E1), dihydrolipoamide acetyltransferase (E2) and lipoamide dehydrogenase (E3). This chain is Dihydrolipoyl dehydrogenase, mitochondrial (LPD), found in Pisum sativum (Garden pea).